The sequence spans 27 residues: Defensin-like protein 1 (27 aa).

Position 1 is a pyrrolidone carboxylic acid (glutamine 1).

It belongs to the DEFL family. Forms oligomers in its native state.

Functionally, possesses antifungal activity sensitive to inorganic cations. This chain is Defensin-like protein 1, found in Brassica campestris (Field mustard).